A 367-amino-acid chain; its full sequence is E3 ubiquitin-protein ligase RGLG3 (367 aa).

The region spanning 37–257 (NLILGIDFTK…KEAAFALAAL (221 aa)) is the VWFA domain. The RING-type zinc-finger motif lies at 323 to 356 (CPICLTNPKDMAFSCGHTTCKECGVVITTCPLCR).

As to quaternary structure, interacts with UBC30, GRXS17 and GLB3. Binds to and coactivates GAF1/IDD2 and ENY/IDD1. Widely expressed.

It localises to the cytoplasm. It is found in the nucleus. The enzyme catalyses S-ubiquitinyl-[E2 ubiquitin-conjugating enzyme]-L-cysteine + [acceptor protein]-L-lysine = [E2 ubiquitin-conjugating enzyme]-L-cysteine + N(6)-ubiquitinyl-[acceptor protein]-L-lysine.. In terms of biological role, possesses E3 ubiquitin-protein ligase in vitro. Acts as upstream modulator of jasmonate (JA) signaling in response to various stimuli, such as JA-inhibited root growth, JA-inductive gene expression, coronatine-mediated pathogen susceptibility, wound-stimulated expression of JA-responsive genes and wound-induced JA biosynthesis. Controls fumonisin B1 (FB1)-triggered programmed cell death (PCD) by modulating the JA signaling pathway. May mediate salicylic acid (SA) suppression of JA signaling in FB1-induced responses. May mediate the formation of 'Lys-48'-linked multiubiquitin chains. Mediates the polyubiquitination and subsequent proteasomal degradation of the target protein GRXS17. The protein is E3 ubiquitin-protein ligase RGLG3 of Arabidopsis thaliana (Mouse-ear cress).